Reading from the N-terminus, the 77-residue chain is CPVAEEHFLVPAHEARGTQGEDQRPAGAASELELQEEGPKLGEERPKPEAGALEERGPRPVVSIVRPRHGPKRKPAK.

Composition is skewed to basic and acidic residues over residues 1–24 (CPVA…EDQR) and 37–58 (EGPK…ERGP). The interval 1–77 (CPVAEEHFLV…RHGPKRKPAK (77 aa)) is disordered. The span at 66 to 77 (RPRHGPKRKPAK) shows a compositional bias: basic residues.

This is an uncharacterized protein from Macaca fascicularis (Crab-eating macaque).